The sequence spans 147 residues: uncharacterized protein (147 aa).

The protein to M.jannaschii MJ1086 N-terminal region.

This is an uncharacterized protein from Methanocaldococcus jannaschii (strain ATCC 43067 / DSM 2661 / JAL-1 / JCM 10045 / NBRC 100440) (Methanococcus jannaschii).